The sequence spans 125 residues: Small ribosomal subunit protein uS12 (125 aa).

3-methylthioaspartic acid is present on Asp89. Residues 106–125 form a disordered region; sequence GVKDRKQSRSKYGAKRPKKA. Over residues 113–125 the composition is skewed to basic residues; the sequence is SRSKYGAKRPKKA.

Belongs to the universal ribosomal protein uS12 family. As to quaternary structure, part of the 30S ribosomal subunit. Contacts proteins S8 and S17. May interact with IF1 in the 30S initiation complex.

With S4 and S5 plays an important role in translational accuracy. In terms of biological role, interacts with and stabilizes bases of the 16S rRNA that are involved in tRNA selection in the A site and with the mRNA backbone. Located at the interface of the 30S and 50S subunits, it traverses the body of the 30S subunit contacting proteins on the other side and probably holding the rRNA structure together. The combined cluster of proteins S8, S12 and S17 appears to hold together the shoulder and platform of the 30S subunit. The sequence is that of Small ribosomal subunit protein uS12 from Variovorax paradoxus (strain S110).